The following is a 233-amino-acid chain: Ribosome maturation protein SDO1 homolog (233 aa).

The protein belongs to the SDO1/SBDS family.

This is Ribosome maturation protein SDO1 homolog from Aeropyrum pernix (strain ATCC 700893 / DSM 11879 / JCM 9820 / NBRC 100138 / K1).